The following is a 295-amino-acid chain: Glycine N-acyltransferase (295 aa).

An N6-acetyllysine; alternate mark is found at Lys15, Lys126, and Lys140. N6-succinyllysine; alternate is present on residues Lys15, Lys126, and Lys140. N6-acetyllysine is present on Lys158. Lys168 carries the post-translational modification N6-succinyllysine. Lys255 is subject to N6-acetyllysine; alternate. Lys255 carries the post-translational modification N6-succinyllysine; alternate.

This sequence belongs to the glycine N-acyltransferase family. Detected in liver (at protein level).

Its subcellular location is the mitochondrion. The enzyme catalyses an acyl-CoA + glycine = an N-acylglycine + CoA + H(+). It carries out the reaction benzoyl-CoA + glycine = N-benzoylglycine + CoA + H(+). Its function is as follows. Mitochondrial acyltransferase which transfers an acyl group to the N-terminus of glycine and glutamine, although much less efficiently. Can conjugate a multitude of substrates to form a variety of N-acylglycines, thereby detoxify xenobiotics, such as benzoic acid or salicylic acid, and endogenous organic acids, such as isovaleric acid. This Bos taurus (Bovine) protein is Glycine N-acyltransferase (GLYAT).